A 465-amino-acid polypeptide reads, in one-letter code: Fumarate hydratase class II (465 aa).

Residues 99–101, 130–133, 140–142, and threonine 188 each bind substrate; these read SGT, HPND, and STN. Histidine 189 serves as the catalytic Proton donor/acceptor. Residue serine 319 is part of the active site. Substrate contacts are provided by residues serine 320 and 325-327; that span reads KVN.

The protein belongs to the class-II fumarase/aspartase family. Fumarase subfamily. Homotetramer.

It is found in the cytoplasm. The catalysed reaction is (S)-malate = fumarate + H2O. The protein operates within carbohydrate metabolism; tricarboxylic acid cycle; (S)-malate from fumarate: step 1/1. In terms of biological role, involved in the TCA cycle. Catalyzes the stereospecific interconversion of fumarate to L-malate. In Prochlorococcus marinus (strain SARG / CCMP1375 / SS120), this protein is Fumarate hydratase class II.